A 145-amino-acid chain; its full sequence is Mannitol-specific phosphotransferase enzyme IIA component (145 aa).

Positions 4 to 144 constitute a PTS EIIA type-2 domain; that stretch reads PILKKENIVL…EEILSILNEV (141 aa). Histidine 64 functions as the Tele-phosphohistidine intermediate in the catalytic mechanism. Histidine 64 bears the Phosphohistidine; by HPr mark.

The protein resides in the cytoplasm. Functionally, the phosphoenolpyruvate-dependent sugar phosphotransferase system (sugar PTS), a major carbohydrate active transport system, catalyzes the phosphorylation of incoming sugar substrates concomitantly with their translocation across the cell membrane. The enzyme II CmtAB PTS system is involved in D-mannitol transport. In Geobacillus stearothermophilus (Bacillus stearothermophilus), this protein is Mannitol-specific phosphotransferase enzyme IIA component.